A 284-amino-acid polypeptide reads, in one-letter code: 1D-myo-inositol 2-acetamido-2-deoxy-alpha-D-glucopyranoside deacetylase (284 aa).

Zn(2+) contacts are provided by His12, Asp15, and His146.

The protein belongs to the MshB deacetylase family. Zn(2+) is required as a cofactor.

It carries out the reaction 1D-myo-inositol 2-acetamido-2-deoxy-alpha-D-glucopyranoside + H2O = 1D-myo-inositol 2-amino-2-deoxy-alpha-D-glucopyranoside + acetate. Catalyzes the deacetylation of 1D-myo-inositol 2-acetamido-2-deoxy-alpha-D-glucopyranoside (GlcNAc-Ins) in the mycothiol biosynthesis pathway. This chain is 1D-myo-inositol 2-acetamido-2-deoxy-alpha-D-glucopyranoside deacetylase, found in Mycolicibacterium gilvum (strain PYR-GCK) (Mycobacterium gilvum (strain PYR-GCK)).